Here is a 619-residue protein sequence, read N- to C-terminus: DNA mismatch repair protein MutL (619 aa).

The protein belongs to the DNA mismatch repair MutL/HexB family.

In terms of biological role, this protein is involved in the repair of mismatches in DNA. It is required for dam-dependent methyl-directed DNA mismatch repair. May act as a 'molecular matchmaker', a protein that promotes the formation of a stable complex between two or more DNA-binding proteins in an ATP-dependent manner without itself being part of a final effector complex. This Myxococcus xanthus (strain DK1622) protein is DNA mismatch repair protein MutL.